A 246-amino-acid polypeptide reads, in one-letter code: Salivary antigen SP32 (246 aa).

The N-terminal stretch at 1–23 (MSGHILTVGLIVVVAHCATLSSS) is a signal peptide. Positions 51 to 160 (DKFYPDISDD…PDLSKYKNSP (110 aa)) are disordered. A compositionally biased stretch (basic and acidic residues) spans 65 to 78 (VVRDNGRKGGDRGR). The segment covering 79-124 (QSTPSGKESHPSATQTGGRRPSQSPCGESRPSGSATSGRRPSQSPR) has biased composition (polar residues). Residues 141-155 (QQDRRQNKKQPDLSK) show a composition bias toward basic and acidic residues.

As to quaternary structure, interacts with human DSG1. Interacts with human DSG3. In terms of tissue distribution, salivary gland (at protein level).

The protein localises to the secreted. Functionally, down-regulates the expression of CD86 and HLA-DR on the surface of lipopolysaccharide (LPS)-stimulated human peripheral blood mononuclear cells (PBMCs). Reduces LPS-induced secretion of IL-1beta/IL1B in human PBMCs. Reduces LPS-induced secretion of various cytokines, such as IL-1beta, TNF-alpha/TNF, MCP-1/CCL2, IL6, IL27 and IL-1alpha/IL1A, in host cultured macrophages probably via inhibition of NF-kappa-B signaling pathway. Reduces production of IFN-gamma/IFNG, IL4 and IL6 in human lymphocytes activated with PMA/ionomycin. Exhibits anti-inflammatory activity in carrageenan-induced paw edema model in rats. The protein is Salivary antigen SP32 of Phlebotomus papatasi (Sandfly).